A 418-amino-acid polypeptide reads, in one-letter code: Equilibrative nucleotide transporter 4 (418 aa).

The next 11 membrane-spanning stretches (helical) occupy residues 20-40 (MVVCCILGIGSLFSWNSMLTI), 54-74 (SRVFTLIYQPIALGTIMILAY), 85-105 (ILTGYILFTISTFLLIVLDLT), 108-128 (GHGGIGHYIVLCTIVASFGLA), 147-169 (LIQSYMAGSGMAGALTSVLRLIT), 186-206 (IFLAISTFIELLCVILYAYVF), 264-284 (HAVNLFLIYVLTLSIFPGFLY), 291-311 (GLGDWYALILVATYNFWDLFG), 326-346 (KALTIAVLTRYFLVPAFYFTA), 353-373 (WMIMLVSILGLTTGHLTVCIM), and 392-412 (LVVFILGGAVVGISLGWLWLI).

Belongs to the SLC29A/ENT transporter (TC 2.A.57) family. As to expression, expressed in leaves and at lowe levels in stems and flowers.

Its subcellular location is the cell membrane. In terms of biological role, nucleoside transporter that can mediate uptake of adenosine, uridine, guanosine or cytidine when expressed in a heterologous system (yeast). In Arabidopsis thaliana (Mouse-ear cress), this protein is Equilibrative nucleotide transporter 4 (ENT4).